The primary structure comprises 256 residues: MTDVSRVLKEARDQGRLTTLDYANLIFDDFMELHGDRHFSDDGAIVGGLAYLAGQPVTVIGIQKGKNLQDNLARNFGQPNPEGYRKALRLMKQAEKFGRPVVTFINTAGAYPGVGAEERGQGEAIAKNLMEMSDLKVPIIAIIIGEGGSGGALALAVADQVWMLENTMYAVLSPEGFASILWKDGSRATEAAELMKITAGELYQMGIVDRIIPEHGYFSSEIVDIIKANLIEQITSLQAKPLDQLLDERYQRFRKY.

A CoA carboxyltransferase C-terminal domain is found at 1 to 236; sequence MTDVSRVLKE…KANLIEQITS (236 aa).

The protein belongs to the AccA family. As to quaternary structure, acetyl-CoA carboxylase is a heterohexamer composed of biotin carboxyl carrier protein (AccB), biotin carboxylase (AccC) and two subunits each of ACCase subunit alpha (AccA) and ACCase subunit beta (AccD).

The protein resides in the cytoplasm. The enzyme catalyses N(6)-carboxybiotinyl-L-lysyl-[protein] + acetyl-CoA = N(6)-biotinyl-L-lysyl-[protein] + malonyl-CoA. It participates in lipid metabolism; malonyl-CoA biosynthesis; malonyl-CoA from acetyl-CoA: step 1/1. Its function is as follows. Component of the acetyl coenzyme A carboxylase (ACC) complex. First, biotin carboxylase catalyzes the carboxylation of biotin on its carrier protein (BCCP) and then the CO(2) group is transferred by the carboxyltransferase to acetyl-CoA to form malonyl-CoA. The chain is Acetyl-coenzyme A carboxylase carboxyl transferase subunit alpha from Streptococcus pyogenes serotype M2 (strain MGAS10270).